A 479-amino-acid polypeptide reads, in one-letter code: Poly(A) polymerase catalytic subunit (479 aa).

Active-site residues include aspartate 202 and aspartate 204. The Ca(2+) site is built by aspartate 202, aspartate 204, and aspartate 253.

Belongs to the poxviridae poly(A) polymerase catalytic subunit family. In terms of assembly, heterodimer of a large (catalytic) subunit and a small (regulatory) subunit.

The enzyme catalyses RNA(n) + ATP = RNA(n)-3'-adenine ribonucleotide + diphosphate. In terms of biological role, polymerase that creates the 3'-poly(A) tail of mRNA's. In Camelus, this protein is Poly(A) polymerase catalytic subunit (OPG063).